Reading from the N-terminus, the 691-residue chain is Calcium-binding and coiled-coil domain-containing protein 1 (691 aa).

The p300 KIX-binding stretch occupies residues 1 to 30 (MEESSLSRAPSRGGVNFLNVARTYIPNTKV). The interval 1–190 (MEESSLSRAP…VQELEAALAT (190 aa)) is N-terminal AD (CTNNB1 binding site). Position 4 is a phosphoserine (Ser4). The interval 45–125 (SDWIGIFKVE…FQFREPRPMD (81 aa)) is interaction with GATA1. Coiled coils occupy residues 145–205 (KATV…YKGL), 232–339 (ELED…AELE), and 417–514 (QSME…ADEK). Residues 501–691 (RKLEARLEKV…FSTQDPFTFE (191 aa)) are C-terminal AD (CTNNB1 binding site); interaction with CCAR1. The segment at 512-605 (DEKWTEDAAT…DSEAEDEKSV (94 aa)) is disordered. The segment at 653-679 (WKECPICKERFPAESDKDALEGHMDGH) adopts a UBZ1-type zinc-finger fold. Cys656, Cys659, His675, and His679 together coordinate Zn(2+).

Belongs to the CALCOCO family. In terms of assembly, part of a calphoglin complex consisting of CALCOCO1, PPA1 and PGM. Interacts with the bHLH-PAS domains of GRIP1, AHR and ARNT. Interacts with CTNNB1 via both its N- and C-terminal regions. Interacts with EP300. Interacts with CCAR1 (via N-terminus) and GATA1. In terms of tissue distribution, expressed in all tissues examined except spleen, with high levels of expression in the heart and kidney.

The protein resides in the cytoplasm. The protein localises to the nucleus. Its function is as follows. Functions as a coactivator for aryl hydrocarbon and nuclear receptors (NR). Recruited to promoters through its contact with the N-terminal basic helix-loop-helix-Per-Arnt-Sim (PAS) domain of transcription factors or coactivators, such as NCOA2. During ER-activation acts synergistically in combination with other NCOA2-binding proteins, such as EP300, CREBBP and CARM1. Involved in the transcriptional activation of target genes in the Wnt/CTNNB1 pathway. Functions as a secondary coactivator in LEF1-mediated transcriptional activation via its interaction with CTNNB1. Coactivator function for nuclear receptors and LEF1/CTNNB1 involves differential utilization of two different activation regions. In association with CCAR1 enhances GATA1- and MED1-mediated transcriptional activation from the gamma-globin promoter during erythroid differentiation of K562 erythroleukemia cells. The sequence is that of Calcium-binding and coiled-coil domain-containing protein 1 (Calcoco1) from Mus musculus (Mouse).